The sequence spans 185 residues: DAN domain family member 5 (185 aa).

A signal peptide spans 1 to 23 (MFRSQFTTLLGLFSGAWLPTGSG). Residue asparagine 39 is glycosylated (N-linked (GlcNAc...) asparagine). 4 cysteine pairs are disulfide-bonded: cysteine 97-cysteine 144, cysteine 111-cysteine 158, cysteine 121-cysteine 179, and cysteine 125-cysteine 181. The region spanning 97 to 182 (CKALSFVQVI…TVLVQKCQCR (86 aa)) is the CTCK domain.

The protein belongs to the DAN family. In terms of tissue distribution, expressed throughout the neural retina and in the photoreceptor nuclear layer. In the retina, widely expressed in inner nuclear layer, as well as in the ganglion cell layer.

It localises to the secreted. Functionally, antagonist of the extracellular signaling protein NODAL, which is required for correct left-right patterning during embryonic development. Antagonist of BMP4 signaling. Antagonist of TGF-beta signaling. Independently of its role in left-right axis establishment, plays a role during heart development, possibly through the regulation of TGF-beta/Nodal signaling pathway. Displays anti-angiogenic activity by inhibiting endothelial sprouting, migration, and proliferation. Once internalized by endothelial cells, may alter their redox and glycolytic balance. The polypeptide is DAN domain family member 5 (Dand5) (Mus musculus (Mouse)).